A 395-amino-acid chain; its full sequence is G-protein coupled receptor 182 (395 aa).

The Extracellular portion of the chain corresponds to 1-53; sequence MSVIPSSRPVSTLAPDNDFREIHNWTELLHLFNQTFSDCHMELNENTKQVVLF. N-linked (GlcNAc...) asparagine glycosylation is found at Asn24 and Asn33. A helical transmembrane segment spans residues 54–75; that stretch reads VFYLAIFVVGLVENVLVICVNC. Over 76 to 86 the chain is Cytoplasmic; it reads RRSGRVGMLNL. The chain crosses the membrane as a helical span at residues 87–109; sequence YILNMAVADLGIILSLPVWMLEV. At 110-123 the chain is on the extracellular side; sequence MLEYTWLWGSFSCR. The cysteines at positions 122 and 198 are disulfide-linked. The chain crosses the membrane as a helical span at residues 124-145; that stretch reads FIHYFYLANMYSSIFFLTCLSI. Residues 146–166 lie on the Cytoplasmic side of the membrane; sequence DRYVTLTNTSPSWQRHQHRIR. A helical membrane pass occupies residues 167 to 189; sequence RAVCAGVWVLSAIIPLPEVVHIQ. The Extracellular segment spans residues 190 to 213; that stretch reads LLDGSEPMCLFLAPFETYSAWALA. A helical transmembrane segment spans residues 214-235; it reads VALSATILGFLLPFPLIAVFNI. Residues 236–254 lie on the Cytoplasmic side of the membrane; that stretch reads LSACRLRRQGQTESRRHCL. The chain crosses the membrane as a helical span at residues 255–276; sequence LMWAYIVVFVICWLPYHVTMLL. Over 277 to 295 the chain is Extracellular; that stretch reads LTLHTTHIFLHCNLVNFLY. A helical transmembrane segment spans residues 296 to 316; it reads FFYEIIDCFSMLHCVANPILY. The Cytoplasmic portion of the chain corresponds to 317–395; the sequence is NFLSPSFRGR…RTPHLHSAIP (79 aa). Ser329 carries the post-translational modification Phosphoserine.

Belongs to the G-protein coupled receptor 1 family. Expressed in a wide variety of peripheral tissues in the adult rat with prominent expression in lung, testis, adrenal and liver.

The protein resides in the cell membrane. Its function is as follows. Orphan receptor. This chain is G-protein coupled receptor 182 (Gpr182), found in Rattus norvegicus (Rat).